The sequence spans 131 residues: Small ribosomal subunit protein uS8 (131 aa).

Belongs to the universal ribosomal protein uS8 family. In terms of assembly, part of the 30S ribosomal subunit. Contacts proteins S5 and S12.

Its function is as follows. One of the primary rRNA binding proteins, it binds directly to 16S rRNA central domain where it helps coordinate assembly of the platform of the 30S subunit. The protein is Small ribosomal subunit protein uS8 of Nitrosomonas europaea (strain ATCC 19718 / CIP 103999 / KCTC 2705 / NBRC 14298).